We begin with the raw amino-acid sequence, 571 residues long: Septation ring formation regulator EzrA (571 aa).

At 1–3 (MYY) the chain is on the extracellular side. The chain crosses the membrane as a helical span at residues 4-22 (MLIGFIIVVIAIISAGYIL). Topologically, residues 23-571 (KRKHYQRINE…ESKVSVDDIE (549 aa)) are cytoplasmic. Coiled coils occupy residues 169–214 (VETK…AQME), 249–298 (AQME…DTLE), 326–374 (DALA…ASGE), 400–438 (KFAE…RERL), and 474–529 (TQDW…ENHF).

This sequence belongs to the EzrA family.

The protein resides in the cell membrane. Its function is as follows. Negative regulator of FtsZ ring formation; modulates the frequency and position of FtsZ ring formation. Inhibits FtsZ ring formation at polar sites. Interacts either with FtsZ or with one of its binding partners to promote depolymerization. The chain is Septation ring formation regulator EzrA from Listeria welshimeri serovar 6b (strain ATCC 35897 / DSM 20650 / CCUG 15529 / CIP 8149 / NCTC 11857 / SLCC 5334 / V8).